The following is a 378-amino-acid chain: Squalene methyltransferase 1 (378 aa).

The chain crosses the membrane as a helical span at residues 17–37 (LLTWKGVAGLVVAITLGYLII).

The protein belongs to the class I-like SAM-binding methyltransferase superfamily. Erg6/SMT family.

Its subcellular location is the microsome membrane. The catalysed reaction is squalene + 2 S-adenosyl-L-methionine = 3,22-dimethyl-1,2,23,24-tetradehydro-2,3,22,23-tetrahydrosqualene + 2 S-adenosyl-L-homocysteine + 2 H(+). In terms of biological role, converts squalene to mono- and dimethyl derivatives, but not to tri- and tetramethylated products. Unable to methylate cycloartenol, zymosterol or lanosterol. Methylates both C-3 and C22 positions, but only C-3 position in monomethylated products. Produces mainly dimethylated squalene. The sequence is that of Squalene methyltransferase 1 (TMT-1) from Botryococcus braunii (Green alga).